We begin with the raw amino-acid sequence, 466 residues long: Glutamate--tRNA ligase 1 (466 aa).

Positions 10-20 (PSPTGLIHLGN) match the 'HIGH' region motif. Cysteine 103, cysteine 105, cysteine 130, and histidine 132 together coordinate Zn(2+). The 'KMSKS' region signature appears at 247 to 251 (PLSKR). Lysine 250 provides a ligand contact to ATP.

Belongs to the class-I aminoacyl-tRNA synthetase family. Glutamate--tRNA ligase type 1 subfamily. In terms of assembly, monomer. Requires Zn(2+) as cofactor.

Its subcellular location is the cytoplasm. The catalysed reaction is tRNA(Glu) + L-glutamate + ATP = L-glutamyl-tRNA(Glu) + AMP + diphosphate. Its function is as follows. Catalyzes the attachment of glutamate to tRNA(Glu) in a two-step reaction: glutamate is first activated by ATP to form Glu-AMP and then transferred to the acceptor end of tRNA(Glu). The sequence is that of Glutamate--tRNA ligase 1 from Methylococcus capsulatus (strain ATCC 33009 / NCIMB 11132 / Bath).